Here is a 480-residue protein sequence, read N- to C-terminus: GTPase Obg (480 aa).

Residues 2 to 159 (TRFIDRVVIH…RDLTLELKTV (158 aa)) form the Obg domain. Residues 160–341 (ADVGLVGFPS…LTFALWDMVA (182 aa)) enclose the OBG-type G domain. Residues 166 to 173 (GFPSAGKS), 191 to 195 (FTTLA), 212 to 215 (DVPG), 292 to 295 (NKID), and 322 to 324 (STV) contribute to the GTP site. Residues Ser-173 and Thr-193 each coordinate Mg(2+). Residues 359–437 (PIPVDETAFS…IGDMTFDWEP (79 aa)) enclose the OCT domain. Positions 441–480 (AGVDVPLTGRGTDVRLEQTDRVGADERKAARKARRQSGDE) are disordered. Basic and acidic residues predominate over residues 452–468 (TDVRLEQTDRVGADERK). Residues 469-480 (AARKARRQSGDE) are compositionally biased toward basic residues.

Belongs to the TRAFAC class OBG-HflX-like GTPase superfamily. OBG GTPase family. As to quaternary structure, monomer. It depends on Mg(2+) as a cofactor.

The protein resides in the cytoplasm. Its function is as follows. An essential GTPase which binds GTP, GDP and possibly (p)ppGpp with moderate affinity, with high nucleotide exchange rates and a fairly low GTP hydrolysis rate. Plays a role in control of the cell cycle, stress response, ribosome biogenesis and in those bacteria that undergo differentiation, in morphogenesis control. The protein is GTPase Obg of Mycolicibacterium vanbaalenii (strain DSM 7251 / JCM 13017 / BCRC 16820 / KCTC 9966 / NRRL B-24157 / PYR-1) (Mycobacterium vanbaalenii).